Reading from the N-terminus, the 213-residue chain is Small ribosomal subunit protein eS1 (213 aa).

Belongs to the eukaryotic ribosomal protein eS1 family.

The chain is Small ribosomal subunit protein eS1 from Desulfurococcus amylolyticus (strain DSM 18924 / JCM 16383 / VKM B-2413 / 1221n) (Desulfurococcus kamchatkensis).